The chain runs to 74 residues: Exodeoxyribonuclease 7 small subunit (74 aa).

This sequence belongs to the XseB family. In terms of assembly, heterooligomer composed of large and small subunits.

It is found in the cytoplasm. The catalysed reaction is Exonucleolytic cleavage in either 5'- to 3'- or 3'- to 5'-direction to yield nucleoside 5'-phosphates.. Its function is as follows. Bidirectionally degrades single-stranded DNA into large acid-insoluble oligonucleotides, which are then degraded further into small acid-soluble oligonucleotides. The polypeptide is Exodeoxyribonuclease 7 small subunit (Thermotoga neapolitana (strain ATCC 49049 / DSM 4359 / NBRC 107923 / NS-E)).